The primary structure comprises 394 residues: Beta-ketothiolase BktB (394 aa).

Cysteine 90 serves as the catalytic Acyl-thioester intermediate. Active-site proton acceptor residues include histidine 350 and cysteine 380.

The protein belongs to the thiolase-like superfamily. Thiolase family.

The enzyme catalyses an acyl-CoA + acetyl-CoA = a 3-oxoacyl-CoA + CoA. It carries out the reaction 2 acetyl-CoA = acetoacetyl-CoA + CoA. Its function is as follows. Required for efficient production of poly(beta-hydroxybutyrate-co-beta-hydroxyvalerate) (PHBV). Catalyzes the condensation of acetyl-CoA and propionyl-CoA to form beta-ketovaleryl-CoA, and the condensation of two acetyl-CoA molecules to form acetoacetyl-CoA. The protein is Beta-ketothiolase BktB (bktB) of Cupriavidus necator (strain ATCC 17699 / DSM 428 / KCTC 22496 / NCIMB 10442 / H16 / Stanier 337) (Ralstonia eutropha).